Here is a 118-residue protein sequence, read N- to C-terminus: MHKEQLMKLHQFFVYVVKEIMDDNLENTDNECKKLFKIYEMLDIRPHHIHRLKSEQKAAILLLSACVASYLANNMDNVPKNLAKKLEENAFKHLNSCKKNIIILEENENNGESAEKEE.

This sequence belongs to the UPF0058 family.

In Methanocaldococcus jannaschii (strain ATCC 43067 / DSM 2661 / JAL-1 / JCM 10045 / NBRC 100440) (Methanococcus jannaschii), this protein is UPF0058 protein MJ1132.